The chain runs to 68 residues: Protein SlyX homolog (68 aa).

It belongs to the SlyX family.

This chain is Protein SlyX homolog, found in Pseudomonas fluorescens (strain ATCC BAA-477 / NRRL B-23932 / Pf-5).